The chain runs to 507 residues: Histidine ammonia-lyase (507 aa).

A cross-link (5-imidazolinone (Ala-Gly)) is located at residues 141–143 (ASG). Position 142 is a 2,3-didehydroalanine (Ser) (Ser142).

The protein belongs to the PAL/histidase family. Post-translationally, contains an active site 4-methylidene-imidazol-5-one (MIO), which is formed autocatalytically by cyclization and dehydration of residues Ala-Ser-Gly.

The protein resides in the cytoplasm. It carries out the reaction L-histidine = trans-urocanate + NH4(+). It participates in amino-acid degradation; L-histidine degradation into L-glutamate; N-formimidoyl-L-glutamate from L-histidine: step 1/3. The sequence is that of Histidine ammonia-lyase from Natranaerobius thermophilus (strain ATCC BAA-1301 / DSM 18059 / JW/NM-WN-LF).